Consider the following 186-residue polypeptide: Casparian strip membrane protein 1 (186 aa).

At 1 to 26 the chain is on the cytoplasmic side; that stretch reads MKGGSIELGEVSKNASTNKGVKRGLS. Residues 27 to 47 traverse the membrane as a helical segment; that stretch reads IMDFILRIIAGVATLASAVAM. Residues 48 to 72 are Extracellular-facing; that stretch reads GTTDERLPFATSFVQFRAEYDDLPS. A helical membrane pass occupies residues 73–93; sequence FVFFVLANSIVCGYLALSLIL. The Cytoplasmic portion of the chain corresponds to 94–107; sequence SILHIVRSTAVKSR. Residues 108–128 traverse the membrane as a helical segment; sequence ILLIVLDMVMMGLLAAAASAA. Topologically, residues 129–157 are extracellular; that stretch reads ASIVYIAHYGNTQANWFPICQQYNSFCER. A helical membrane pass occupies residues 158–178; that stretch reads ISGSLIGSYIAVALFIIIILL. Over 179 to 186 the chain is Cytoplasmic; sequence SQSAISRN.

It belongs to the Casparian strip membrane proteins (CASP) family. As to quaternary structure, homodimer and heterodimers.

It is found in the cell membrane. Its function is as follows. Regulates membrane-cell wall junctions and localized cell wall deposition. Required for establishment of the Casparian strip membrane domain (CSD) and the subsequent formation of Casparian strips, a cell wall modification of the root endodermis that determines an apoplastic barrier between the intraorganismal apoplasm and the extraorganismal apoplasm and prevents lateral diffusion. The chain is Casparian strip membrane protein 1 from Medicago truncatula (Barrel medic).